The sequence spans 147 residues: Lipoprotein signal peptidase (147 aa).

The next 4 helical transmembrane spans lie at 10-30 (ISIF…IKFL), 34-54 (GIVK…GTAF), 59-79 (FLGS…LVYM), and 87-107 (WFIY…RLIY). Residues Asp-112 and Asp-130 contribute to the active site. The chain crosses the membrane as a helical span at residues 121–141 (LHWPAFNVADSAISIGIVLFV).

It belongs to the peptidase A8 family.

It localises to the cell inner membrane. It carries out the reaction Release of signal peptides from bacterial membrane prolipoproteins. Hydrolyzes -Xaa-Yaa-Zaa-|-(S,diacylglyceryl)Cys-, in which Xaa is hydrophobic (preferably Leu), and Yaa (Ala or Ser) and Zaa (Gly or Ala) have small, neutral side chains.. It participates in protein modification; lipoprotein biosynthesis (signal peptide cleavage). In terms of biological role, this protein specifically catalyzes the removal of signal peptides from prolipoproteins. This Thermodesulfovibrio yellowstonii (strain ATCC 51303 / DSM 11347 / YP87) protein is Lipoprotein signal peptidase.